The following is a 136-amino-acid chain: MLQPKRTKFRKMHKGRNRGLAQGTDVSFGTFGLKAVGRGRLTARQIEAARRAMTRAVKRQGKIWIRVFPDKPITEKPLEVRMGKGKGNVEYWVALIQPGKVLYEMDGVPEEVAREAFKLAAAKLPIKTTFVTKTVM.

This sequence belongs to the universal ribosomal protein uL16 family. As to quaternary structure, part of the 50S ribosomal subunit.

Its function is as follows. Binds 23S rRNA and is also seen to make contacts with the A and possibly P site tRNAs. The chain is Large ribosomal subunit protein uL16 from Serratia proteamaculans (strain 568).